The chain runs to 313 residues: tRNA-cytidine(32) 2-sulfurtransferase (313 aa).

The PP-loop motif signature appears at S54 to S59. Positions 129, 132, and 220 each coordinate [4Fe-4S] cluster.

This sequence belongs to the TtcA family. In terms of assembly, homodimer. Mg(2+) serves as cofactor. The cofactor is [4Fe-4S] cluster.

It localises to the cytoplasm. It catalyses the reaction cytidine(32) in tRNA + S-sulfanyl-L-cysteinyl-[cysteine desulfurase] + AH2 + ATP = 2-thiocytidine(32) in tRNA + L-cysteinyl-[cysteine desulfurase] + A + AMP + diphosphate + H(+). Its pathway is tRNA modification. In terms of biological role, catalyzes the ATP-dependent 2-thiolation of cytidine in position 32 of tRNA, to form 2-thiocytidine (s(2)C32). The sulfur atoms are provided by the cysteine/cysteine desulfurase (IscS) system. This is tRNA-cytidine(32) 2-sulfurtransferase from Methylibium petroleiphilum (strain ATCC BAA-1232 / LMG 22953 / PM1).